A 148-amino-acid polypeptide reads, in one-letter code: EKC/KEOPS complex subunit Lage3 (148 aa).

A disordered region spans residues 1-21 (MQTAHTGLSHTADGADGQTSR).

The protein belongs to the CTAG/PCC1 family. As to quaternary structure, component of the EKC/KEOPS complex composed of at least GON7, TP53RK, TPRKB, OSGEP and LAGE3; the whole complex dimerizes.

The protein resides in the cytoplasm. It is found in the nucleus. Component of the EKC/KEOPS complex that is required for the formation of a threonylcarbamoyl group on adenosine at position 37 (t(6)A37) in tRNAs that read codons beginning with adenine. The complex is probably involved in the transfer of the threonylcarbamoyl moiety of threonylcarbamoyl-AMP (TC-AMP) to the N6 group of A37. LAGE3 functions as a dimerization module for the complex. This Mus musculus (Mouse) protein is EKC/KEOPS complex subunit Lage3.